Here is a 466-residue protein sequence, read N- to C-terminus: 23S rRNA (uracil(1939)-C(5))-methyltransferase RlmD (466 aa).

Residues 1–54 (MVDVLNIESLDLEARGIAHRDGKVLFVEGALPGERVTVQTVRRKPSYEIAKVEE) enclose the TRAM domain. 4 residues coordinate [4Fe-4S] cluster: C67, C73, C76, and C155. S-adenosyl-L-methionine-binding residues include Q264, F293, N298, E314, N342, and D363. The Nucleophile role is filled by C393.

This sequence belongs to the class I-like SAM-binding methyltransferase superfamily. RNA M5U methyltransferase family. RlmD subfamily.

It carries out the reaction uridine(1939) in 23S rRNA + S-adenosyl-L-methionine = 5-methyluridine(1939) in 23S rRNA + S-adenosyl-L-homocysteine + H(+). Catalyzes the formation of 5-methyl-uridine at position 1939 (m5U1939) in 23S rRNA. The chain is 23S rRNA (uracil(1939)-C(5))-methyltransferase RlmD from Bordetella pertussis (strain Tohama I / ATCC BAA-589 / NCTC 13251).